Here is a 967-residue protein sequence, read N- to C-terminus: Probable helicase DDB_G0274399 (967 aa).

Positions 161-192 (EMTDDEDTAPTSAATHVGAPTKSTTTTTTTTT) are disordered. 357 to 364 (GPPGTGKT) serves as a coordination point for ATP. Disordered stretches follow at residues 529–553 (SAIPSSSASTAAATSGSSRSTQDTS) and 892–967 (QKQK…RTRR). Residues 890-949 (NLQKQKDIEKRKKQHKRQKQKSKENDKKKQLKKRKELNNNDNNNNNKESSNKEVQEITNA) adopt a coiled-coil conformation. Residues 900-909 (RKKQHKRQKQ) show a composition bias toward basic residues. The span at 928–937 (NNDNNNNNKE) shows a compositional bias: low complexity.

It belongs to the DNA2/NAM7 helicase family.

The protein localises to the nucleus. This Dictyostelium discoideum (Social amoeba) protein is Probable helicase DDB_G0274399.